Consider the following 480-residue polypeptide: Probable cytosol aminopeptidase (480 aa).

The Mn(2+) site is built by lysine 248 and aspartate 253. Lysine 260 is a catalytic residue. Mn(2+)-binding residues include aspartate 271, aspartate 330, and glutamate 332. Arginine 334 is a catalytic residue.

It belongs to the peptidase M17 family. Mn(2+) is required as a cofactor.

It is found in the cytoplasm. It carries out the reaction Release of an N-terminal amino acid, Xaa-|-Yaa-, in which Xaa is preferably Leu, but may be other amino acids including Pro although not Arg or Lys, and Yaa may be Pro. Amino acid amides and methyl esters are also readily hydrolyzed, but rates on arylamides are exceedingly low.. The enzyme catalyses Release of an N-terminal amino acid, preferentially leucine, but not glutamic or aspartic acids.. Its function is as follows. Presumably involved in the processing and regular turnover of intracellular proteins. Catalyzes the removal of unsubstituted N-terminal amino acids from various peptides. The sequence is that of Probable cytosol aminopeptidase from Solibacter usitatus (strain Ellin6076).